We begin with the raw amino-acid sequence, 616 residues long: GDP-Man:Man(3)GlcNAc(2)-PP-Dol alpha-1,2-mannosyltransferase (616 aa).

A topological domain (lumenal) is located at residue M1. Residues 2–21 form a helical membrane-spanning segment; it reads GYLVVIGVIACVAYGILQVV. At 22 to 199 the chain is on the cytoplasmic side; it reads STVLPRLLLV…RLIDGDYWKR (178 aa). An intramembrane region (helical) is located at residues 200-220; it reads FTLIGQLFGSMVLSWEAMFEL. The Cytoplasmic segment spans residues 221 to 460; that stretch reads SPDVWIDTIG…FGLNAMWNEH (240 aa). Residues 461–481 constitute an intramembrane region (helical); that stretch reads FGIGVVEYMSRGVIPLCHASA. Residues 482–616 lie on the Cytoplasmic side of the membrane; it reads GPLLDIVTNW…ERRSGIEKVY (135 aa).

This sequence belongs to the glycosyltransferase group 1 family.

The protein resides in the endoplasmic reticulum membrane. It carries out the reaction an alpha-D-Man-(1-&gt;3)-[alpha-D-Man-(1-&gt;6)]-beta-D-Man-(1-&gt;4)-beta-D-GlcNAc-(1-&gt;4)-alpha-D-GlcNAc-diphospho-di-trans,poly-cis-dolichol + 2 GDP-alpha-D-mannose = an alpha-D-Man-(1-&gt;2)-alpha-D-Man-(1-&gt;2)-alpha-D-Man-(1-&gt;3)-[alpha-D-Man-(1-&gt;6)]-beta-D-Man-(1-&gt;4)-beta-D-GlcNAc-(1-&gt;4)-alpha-D-GlcNAc-diphospho-di-trans,poly-cis-dolichol + 2 GDP + 2 H(+). It functions in the pathway protein modification; protein glycosylation. GDP-Man:Man(3)GlcNAc(2)-PP-Dol alpha-1,2-mannosyltransferase that operates in the biosynthetic pathway of dolichol-linked oligosaccharides, the glycan precursors employed in protein asparagine (N)-glycosylation. The assembly of dolichol-linked oligosaccharides begins on the cytosolic side of the endoplasmic reticulum membrane and finishes in its lumen. The sequential addition of sugars to dolichol pyrophosphate produces dolichol-linked oligosaccharides containing fourteen sugars, including two GlcNAcs, nine mannoses and three glucoses. Once assembled, the oligosaccharide is transferred from the lipid to nascent proteins by oligosaccharyltransferases. Catalyzes, on the cytoplasmic face of the endoplasmic reticulum, the addition of the fourth and fifth mannose residues to the dolichol-linked oligosaccharide chain, to produce Man(5)GlcNAc(2)-PP-dolichol core oligosaccharide. This chain is GDP-Man:Man(3)GlcNAc(2)-PP-Dol alpha-1,2-mannosyltransferase (ALG11), found in Debaryomyces hansenii (strain ATCC 36239 / CBS 767 / BCRC 21394 / JCM 1990 / NBRC 0083 / IGC 2968) (Yeast).